A 186-amino-acid polypeptide reads, in one-letter code: Alkyl hydroperoxide reductase AhpD (186 aa).

The active-site Proton donor is Cys131. Cys131 and Cys134 are joined by a disulfide. The active-site Cysteine sulfenic acid (-SOH) intermediate is the Cys134.

It belongs to the AhpD family.

The catalysed reaction is N(6)-[(R)-dihydrolipoyl]-L-lysyl-[lipoyl-carrier protein] + a hydroperoxide = N(6)-[(R)-lipoyl]-L-lysyl-[lipoyl-carrier protein] + an alcohol + H2O. Functionally, antioxidant protein with alkyl hydroperoxidase activity. Required for the reduction of the AhpC active site cysteine residues and for the regeneration of the AhpC enzyme activity. The polypeptide is Alkyl hydroperoxide reductase AhpD (Rhodospirillum centenum (strain ATCC 51521 / SW)).